The primary structure comprises 475 residues: Ribulose bisphosphate carboxylase large chain (475 aa).

Residues 1–2 (MS) constitute a propeptide that is removed on maturation. Pro-3 is modified (N-acetylproline). Lys-14 carries the N6,N6,N6-trimethyllysine modification. Positions 123 and 173 each coordinate substrate. The active-site Proton acceptor is the Lys-175. Lys-177 lines the substrate pocket. Mg(2+) is bound by residues Lys-201, Asp-203, and Glu-204. Residue Lys-201 is modified to N6-carboxylysine. His-294 serves as the catalytic Proton acceptor. The substrate site is built by Arg-295, His-327, and Ser-379.

It belongs to the RuBisCO large chain family. Type I subfamily. Heterohexadecamer of 8 large chains and 8 small chains; disulfide-linked. The disulfide link is formed within the large subunit homodimers. It depends on Mg(2+) as a cofactor. The disulfide bond which can form in the large chain dimeric partners within the hexadecamer appears to be associated with oxidative stress and protein turnover.

Its subcellular location is the plastid. The protein localises to the chloroplast. It carries out the reaction 2 (2R)-3-phosphoglycerate + 2 H(+) = D-ribulose 1,5-bisphosphate + CO2 + H2O. The catalysed reaction is D-ribulose 1,5-bisphosphate + O2 = 2-phosphoglycolate + (2R)-3-phosphoglycerate + 2 H(+). RuBisCO catalyzes two reactions: the carboxylation of D-ribulose 1,5-bisphosphate, the primary event in carbon dioxide fixation, as well as the oxidative fragmentation of the pentose substrate in the photorespiration process. Both reactions occur simultaneously and in competition at the same active site. The chain is Ribulose bisphosphate carboxylase large chain from Plumbago auriculata (Cape leadwort).